The chain runs to 1662 residues: Cortactin-binding protein 2 (1662 aa).

Disordered stretches follow at residues 1–23 (MATD…AGAA), 202–235 (KKKT…EFDT), 365–439 (IGVS…LHPG), and 453–477 (GNAN…SPTS). Positions 118–275 (RKMQERMSAQ…EQLKRGSDSK (158 aa)) form a coiled coil. Residues 385–395 (PSTGSTPDPTS) are compositionally biased toward low complexity. Positions 404-421 (AAPSTAQTPGITPQNSQA) are enriched in polar residues. Arg-497 is modified (asymmetric dimethylarginine). The interval 498-615 (FTGPQAGAPP…SSPQLPPKPS (118 aa)) is disordered. Composition is skewed to polar residues over residues 516–529 (DVST…TSVK) and 582–592 (TVASPPSSLPQ). 5 ANK repeats span residues 708 to 738 (GRPT…DINY), 742 to 771 (DGHS…QVNA), 775 to 804 (NGFT…NINH), 808 to 837 (GGQT…DRSV), and 841 to 870 (DGWT…PAHG). A disordered region spans residues 871–897 (NSFSEEESESGVFDLDEGEESPEGKSK). The span at 874–891 (SEEESESGVFDLDEGEES) shows a compositional bias: acidic residues. Residues 911 to 941 (EGWTAAHIAASKGFKNCLEILCRHGGLETER) form an ANK 6 repeat. A disordered region spans residues 1446 to 1473 (KKKGESGAWRKVNTSPRRKSGRFSLPTW). Ser-1523 carries the phosphoserine modification. Residues 1614–1662 (VPRSKVTQCSQNTKRSSSSSNTRQIEINNNSKEENWNLHKNEHLEKPNK) form a disordered region. Residues 1623-1637 (SQNTKRSSSSSNTRQ) show a composition bias toward low complexity. Residues 1644–1662 (SKEENWNLHKNEHLEKPNK) show a composition bias toward basic and acidic residues.

In terms of assembly, interacts with CTTN/cortactin SH3 domain. Interacts with STRN, STRN4/zinedin and MOB4/phocein; this interactions mediate the association with the STRIPAK core complex and may regulate dendritic spine distribution of the STRIPAK complex in hippocampal neurons. Activation of glutamate receptors weakens the interaction with STRN and STRN4.

The protein resides in the cytoplasm. It is found in the cell cortex. The protein localises to the cell projection. Its subcellular location is the dendritic spine. Regulates the dendritic spine distribution of CTTN/cortactin in hippocampal neurons, and thus controls dendritic spinogenesis and dendritic spine maintenance. Associates with the striatin-interacting phosphatase and kinase (STRIPAK) core complex to regulate dendritic spine distribution of the STRIPAK complex in hippocampal neurons. This chain is Cortactin-binding protein 2 (CTTNBP2), found in Callithrix jacchus (White-tufted-ear marmoset).